Reading from the N-terminus, the 183-residue chain is Capsid protein (183 aa).

The interval 136-183 (NAPILSTLPETTVVRRRGRSPRRRTPSPRRRRSQSPRRRRSQSPASQC) is disordered. Positions 149-176 (VRRRGRSPRRRTPSPRRRRSQSPRRRRS) are enriched in basic residues. Ser155, Ser162, and Ser170 each carry phosphoserine; by host. Residues 155–161 (SPRRRTP) form a 1; half-length repeat. The 3 X 8 AA repeats of S-P-R-R-R-[PR]-S-Q stretch occupies residues 155–177 (SPRRRTPSPRRRRSQSPRRRRSQ). Positions 158 to 175 (RRTPSPRRRRSQSPRRRR) match the Bipartite nuclear localization signal motif. Tandem repeats lie at residues 162 to 169 (SPRRRRSQ) and 170 to 177 (SPRRRRSQ). Residues 177 to 183 (QSPASQC) are RNA binding.

Belongs to the orthohepadnavirus core antigen family. In terms of assembly, homodimerizes, then multimerizes. Interacts with cytosol exposed regions of viral L glycoprotein present in the reticulum-to-Golgi compartment. Interacts with human FLNB. Phosphorylated form interacts with host importin alpha; this interaction depends on the exposure of the NLS, which itself depends upon genome maturation and/or phosphorylation of the capsid protein. Interacts with host NUP153. Post-translationally, phosphorylated by host SRPK1, SRPK2, and maybe protein kinase C or GAPDH. Phosphorylation is critical for pregenomic RNA packaging. Protein kinase C phosphorylation is stimulated by HBx protein and may play a role in transport of the viral genome to the nucleus at the late step during the viral replication cycle.

The protein resides in the virion. The protein localises to the host cytoplasm. Functionally, self assembles to form an icosahedral capsid. Most capsids appear to be large particles with an icosahedral symmetry of T=4 and consist of 240 copies of capsid protein, though a fraction forms smaller T=3 particles consisting of 180 capsid proteins. Entering capsids are transported along microtubules to the nucleus. Phosphorylation of the capsid is thought to induce exposure of nuclear localization signal in the C-terminal portion of the capsid protein that allows binding to the nuclear pore complex via the importin (karyopherin-) alpha and beta. Capsids are imported in intact form through the nuclear pore into the nuclear basket, where it probably binds NUP153. Only capsids that contain the mature viral genome can release the viral DNA and capsid protein into the nucleoplasm. Immature capsids get stuck in the basket. Capsids encapsulate the pre-genomic RNA and the P protein. Pre-genomic RNA is reverse-transcribed into DNA while the capsid is still in the cytoplasm. The capsid can then either be directed to the nucleus, providing more genomes for transcription, or bud through the endoplasmic reticulum to provide new virions. This is Capsid protein from Pan troglodytes (Chimpanzee).